The sequence spans 248 residues: Ubiquinone biosynthesis O-methyltransferase (248 aa).

Residues Arg40, Gly71, Asp92, and Met135 each contribute to the S-adenosyl-L-methionine site.

This sequence belongs to the methyltransferase superfamily. UbiG/COQ3 family.

It carries out the reaction a 3-demethylubiquinol + S-adenosyl-L-methionine = a ubiquinol + S-adenosyl-L-homocysteine + H(+). The enzyme catalyses a 3-(all-trans-polyprenyl)benzene-1,2-diol + S-adenosyl-L-methionine = a 2-methoxy-6-(all-trans-polyprenyl)phenol + S-adenosyl-L-homocysteine + H(+). It participates in cofactor biosynthesis; ubiquinone biosynthesis. In terms of biological role, O-methyltransferase that catalyzes the 2 O-methylation steps in the ubiquinone biosynthetic pathway. This is Ubiquinone biosynthesis O-methyltransferase from Roseobacter denitrificans (strain ATCC 33942 / OCh 114) (Erythrobacter sp. (strain OCh 114)).